The primary structure comprises 123 residues: MPTISQLVRKGREKLVVKGKSPALKESPQKRGVCTRVYTTTPKKPNSALRKVARVRLTNGIEVTSYIPGVGHNLQEHSVVMIRGGRVKDLPGVRYHIVRGTLDSVGVAGRKQSRSKYGAKRPS.

At Asp-89 the chain carries 3-methylthioaspartic acid.

Belongs to the universal ribosomal protein uS12 family. As to quaternary structure, part of the 30S ribosomal subunit. Contacts proteins S8 and S17. May interact with IF1 in the 30S initiation complex.

With S4 and S5 plays an important role in translational accuracy. Its function is as follows. Interacts with and stabilizes bases of the 16S rRNA that are involved in tRNA selection in the A site and with the mRNA backbone. Located at the interface of the 30S and 50S subunits, it traverses the body of the 30S subunit contacting proteins on the other side and probably holding the rRNA structure together. The combined cluster of proteins S8, S12 and S17 appears to hold together the shoulder and platform of the 30S subunit. In Myxococcus xanthus, this protein is Small ribosomal subunit protein uS12.